Consider the following 470-residue polypeptide: ATP synthase subunit beta (470 aa).

157-164 (GGAGVGKT) is an ATP binding site.

This sequence belongs to the ATPase alpha/beta chains family. In terms of assembly, F-type ATPases have 2 components, CF(1) - the catalytic core - and CF(0) - the membrane proton channel. CF(1) has five subunits: alpha(3), beta(3), gamma(1), delta(1), epsilon(1). CF(0) has three main subunits: a(1), b(2) and c(9-12). The alpha and beta chains form an alternating ring which encloses part of the gamma chain. CF(1) is attached to CF(0) by a central stalk formed by the gamma and epsilon chains, while a peripheral stalk is formed by the delta and b chains.

The protein resides in the cell inner membrane. The catalysed reaction is ATP + H2O + 4 H(+)(in) = ADP + phosphate + 5 H(+)(out). Produces ATP from ADP in the presence of a proton gradient across the membrane. The catalytic sites are hosted primarily by the beta subunits. The chain is ATP synthase subunit beta from Geobacter sp. (strain M21).